A 180-amino-acid polypeptide reads, in one-letter code: D(1A) dopamine receptor (180 aa).

Residues 1–10 form a helical membrane-spanning segment; sequence NTLLVCAAVI. The Cytoplasmic portion of the chain corresponds to 11–21; the sequence is RFRHLRSKVTN. Residues 22-48 form a helical membrane-spanning segment; it reads FFVISLAVSDLLVAVLVMPWKAVAEIA. The Extracellular segment spans residues 49–57; sequence GFWPFGSFC. A disulfide bridge connects residues cysteine 57 and cysteine 147. A helical membrane pass occupies residues 58–80; sequence NIWVAFDIMCSTASILNLCVISV. Topologically, residues 81-99 are cytoplasmic; it reads DRYWAISSPFRYERKMTPK. A helical transmembrane segment spans residues 100 to 124; it reads AAFILIGVAWTLSVLISFIPVQLSW. Residues 125-153 are Extracellular-facing; sequence HKAKPTSPPDGNATSLDETVDNCDSSLSR. N-linked (GlcNAc...) asparagine glycosylation occurs at asparagine 136. Residues 154-179 form a helical membrane-spanning segment; it reads TYSISSSLVNFYNPVAIMXVTYTRIH. Arginine 180 is a topological domain (cytoplasmic).

Belongs to the G-protein coupled receptor 1 family. As to quaternary structure, interacts with DNAJC14 via its C-terminus. Interacts with DRD2. Interacts with DORIP1.

The protein resides in the cell membrane. It is found in the endoplasmic reticulum membrane. It localises to the cell projection. Its subcellular location is the cilium membrane. In terms of biological role, dopamine receptor whose activity is mediated by G proteins which activate adenylyl cyclase. In Oryctolagus cuniculus (Rabbit), this protein is D(1A) dopamine receptor (DRD1).